Here is a 412-residue protein sequence, read N- to C-terminus: Peptidase T (412 aa).

His81 lines the Zn(2+) pocket. Asp83 is an active-site residue. Asp144 is a Zn(2+) binding site. Glu178 (proton acceptor) is an active-site residue. 3 residues coordinate Zn(2+): Glu179, Asp201, and His383.

It belongs to the peptidase M20B family. It depends on Zn(2+) as a cofactor.

Its subcellular location is the cytoplasm. The enzyme catalyses Release of the N-terminal residue from a tripeptide.. In terms of biological role, cleaves the N-terminal amino acid of tripeptides. This is Peptidase T from Bacillus cereus (strain Q1).